We begin with the raw amino-acid sequence, 419 residues long: DNA primase DnaG (419 aa).

A Toprim domain is found at 168–244 (DTIIVVEGRS…KVDYVARAPE (77 aa)). Positions 174, 218, and 220 each coordinate Mg(2+). Basic and acidic residues-rich tracts occupy residues 280–291 (KPAEEAVKREEE) and 306–316 (KAAKPPEEKPP). The tract at residues 280-317 (KPAEEAVKREEEAAAEAKPPAPAVQEKAAKPPEEKPPT) is disordered.

This sequence belongs to the archaeal DnaG primase family. Forms a ternary complex with MCM helicase and DNA. Component of the archaeal exosome complex. It depends on Mg(2+) as a cofactor.

It catalyses the reaction ssDNA + n NTP = ssDNA/pppN(pN)n-1 hybrid + (n-1) diphosphate.. Its function is as follows. RNA polymerase that catalyzes the synthesis of short RNA molecules used as primers for DNA polymerase during DNA replication. Also part of the exosome, which is a complex involved in RNA degradation. Acts as a poly(A)-binding protein that enhances the interaction between heteromeric, adenine-rich transcripts and the exosome. The sequence is that of DNA primase DnaG from Aeropyrum pernix (strain ATCC 700893 / DSM 11879 / JCM 9820 / NBRC 100138 / K1).